The primary structure comprises 154 residues: 6,7-dimethyl-8-ribityllumazine synthase (154 aa).

5-amino-6-(D-ribitylamino)uracil contacts are provided by residues phenylalanine 23, 57–59 (AFE), and 81–83 (AVI). 86–87 (AT) serves as a coordination point for (2S)-2-hydroxy-3-oxobutyl phosphate. Histidine 89 functions as the Proton donor in the catalytic mechanism. Phenylalanine 114 contacts 5-amino-6-(D-ribitylamino)uracil. Arginine 128 provides a ligand contact to (2S)-2-hydroxy-3-oxobutyl phosphate.

This sequence belongs to the DMRL synthase family.

The enzyme catalyses (2S)-2-hydroxy-3-oxobutyl phosphate + 5-amino-6-(D-ribitylamino)uracil = 6,7-dimethyl-8-(1-D-ribityl)lumazine + phosphate + 2 H2O + H(+). Its pathway is cofactor biosynthesis; riboflavin biosynthesis; riboflavin from 2-hydroxy-3-oxobutyl phosphate and 5-amino-6-(D-ribitylamino)uracil: step 1/2. Catalyzes the formation of 6,7-dimethyl-8-ribityllumazine by condensation of 5-amino-6-(D-ribitylamino)uracil with 3,4-dihydroxy-2-butanone 4-phosphate. This is the penultimate step in the biosynthesis of riboflavin. This Nautilia profundicola (strain ATCC BAA-1463 / DSM 18972 / AmH) protein is 6,7-dimethyl-8-ribityllumazine synthase.